Reading from the N-terminus, the 298-residue chain is Ketohexokinase (298 aa).

The beta-D-fructose site is built by Asp-15, Gly-41, Asn-42, and Asn-45. ATP is bound by residues Arg-108, 226 to 229, and 255 to 258; these read AEEG and GAGD. A beta-D-fructose-binding site is contributed by Asp-258.

It belongs to the carbohydrate kinase PfkB family. In terms of assembly, homodimer. In terms of tissue distribution, most abundant in liver, kidney, gut, spleen and pancreas. Low levels also found in adrenal, muscle, brain and eye.

It catalyses the reaction beta-D-fructose + ATP = beta-D-fructose 1-phosphate + ADP + H(+). Its pathway is carbohydrate metabolism; fructose metabolism. Requires potassium. Inhibition by ADP. Catalyzes the phosphorylation of the ketose sugar fructose to fructose-1-phosphate. The sequence is that of Ketohexokinase from Homo sapiens (Human).